The chain runs to 321 residues: Sideroflexin-3 (321 aa).

N-acetylmethionine is present on Met-1. Transmembrane regions (helical) follow at residues 146–164, 174–194, 225–245, and 266–286; these read LGTAYVSATTGAVATALGL, LVGRFVPFAAVAAANCINIPL, IFQVVISRIGMAIPAMAIPPV, and LQVGLVGFCLVFATPLCCALF.

The protein belongs to the sideroflexin family. Widely expressed.

It is found in the mitochondrion membrane. It carries out the reaction L-serine(in) = L-serine(out). Its function is as follows. Mitochondrial serine transporter that mediates transport of serine into mitochondria, an important step of the one-carbon metabolism pathway. Mitochondrial serine is converted to glycine and formate, which then exits to the cytosol where it is used to generate the charged folates that serve as one-carbon donors. The chain is Sideroflexin-3 from Mus musculus (Mouse).